The sequence spans 191 residues: 3-isopropylmalate dehydratase small subunit (191 aa).

This sequence belongs to the LeuD family. LeuD type 1 subfamily. In terms of assembly, heterodimer of LeuC and LeuD.

The enzyme catalyses (2R,3S)-3-isopropylmalate = (2S)-2-isopropylmalate. The protein operates within amino-acid biosynthesis; L-leucine biosynthesis; L-leucine from 3-methyl-2-oxobutanoate: step 2/4. In terms of biological role, catalyzes the isomerization between 2-isopropylmalate and 3-isopropylmalate, via the formation of 2-isopropylmaleate. This Lactococcus lactis subsp. cremoris (strain MG1363) protein is 3-isopropylmalate dehydratase small subunit.